Reading from the N-terminus, the 246-residue chain is uncharacterized protein (246 aa).

This is an uncharacterized protein from Acidianus sp. F28 (AFV-2).